A 217-amino-acid polypeptide reads, in one-letter code: Vesicle-associated membrane protein 723 (217 aa).

The Cytoplasmic portion of the chain corresponds to 1–192 (MAQQSLFYSF…KWFQNMKIKL (192 aa)). A Longin domain is found at 10-114 (FIARGTVILV…SLNKEFGSNL (105 aa)). In terms of domain architecture, v-SNARE coiled-coil homology spans 130 to 186 (NLAKAKAQVSEVKSLMMENIEKVLARGVICEMLGSSESQPQAFYIKRTQMKRKKWFQ). A helical; Anchor for type IV membrane protein transmembrane segment spans residues 193–213 (IVLAIIIALILIIILSVCGGF). Residues 214 to 217 (NCGK) are Vesicular-facing.

The protein belongs to the synaptobrevin family. Highly expressed in stems and roots. Detected in flowers and leaves.

Its subcellular location is the endoplasmic reticulum membrane. In terms of biological role, involved in the targeting and/or fusion of transport vesicles to their target membrane. In Arabidopsis thaliana (Mouse-ear cress), this protein is Vesicle-associated membrane protein 723.